The sequence spans 169 residues: S-ribosylhomocysteine lyase (169 aa).

Fe cation contacts are provided by histidine 54, histidine 58, and cysteine 129.

This sequence belongs to the LuxS family. Homodimer. Fe cation serves as cofactor.

The enzyme catalyses S-(5-deoxy-D-ribos-5-yl)-L-homocysteine = (S)-4,5-dihydroxypentane-2,3-dione + L-homocysteine. Its function is as follows. Involved in the synthesis of autoinducer 2 (AI-2) which is secreted by bacteria and is used to communicate both the cell density and the metabolic potential of the environment. The regulation of gene expression in response to changes in cell density is called quorum sensing. Catalyzes the transformation of S-ribosylhomocysteine (RHC) to homocysteine (HC) and 4,5-dihydroxy-2,3-pentadione (DPD). In Glaesserella parasuis serovar 5 (strain SH0165) (Haemophilus parasuis), this protein is S-ribosylhomocysteine lyase.